The chain runs to 310 residues: tRNA pseudouridine synthase B (310 aa).

The active-site Nucleophile is the Asp49.

Belongs to the pseudouridine synthase TruB family. Type 1 subfamily.

It catalyses the reaction uridine(55) in tRNA = pseudouridine(55) in tRNA. In terms of biological role, responsible for synthesis of pseudouridine from uracil-55 in the psi GC loop of transfer RNAs. The sequence is that of tRNA pseudouridine synthase B from Rhizobium johnstonii (strain DSM 114642 / LMG 32736 / 3841) (Rhizobium leguminosarum bv. viciae).